Reading from the N-terminus, the 148-residue chain is MRYITGGIALGSALILGSLVGAGATASATPAPAPAAQQSLYAPSALVLTVGQGDKAASAGVQRAVTLNCMPKPSGTHPDARGACDQLRAASGNFAEITKIKSGTACTKEWNPFVVTAEGVWEGQRVKYEHTFANPCEMKAGKGTVFEF.

Positions 1 to 38 are cleaved as a signal peptide; that stretch reads MRYITGGIALGSALILGSLVGAGATASATPAPAPAAQQ. 2 cysteine pairs are disulfide-bonded: Cys-69-Cys-84 and Cys-106-Cys-136.

The protein belongs to the protease inhibitor I16 (SSI) family. In terms of assembly, homodimer.

It is found in the secreted. Its function is as follows. Inhibits transglutaminase-activating metalloprotease. The sequence is that of Transglutaminase-activating metalloprotease inhibitor (sti) from Streptomyces mobaraensis (Streptoverticillium mobaraense).